A 175-amino-acid polypeptide reads, in one-letter code: NADH-quinone oxidoreductase subunit B (175 aa).

[4Fe-4S] cluster-binding residues include cysteine 54, cysteine 55, cysteine 119, and cysteine 149.

Belongs to the complex I 20 kDa subunit family. As to quaternary structure, NDH-1 is composed of at least 14 different subunits, Nqo1 to Nqo14. The complex has a L-shaped structure, with the hydrophobic arm (subunits Nqo7, Nqo8, Nqo10 to Nqo14) embedded in the inner membrane and the hydrophilic peripheral arm (subunits Nqo1 to Nqo6, Nqo9) protruding into the bacterial cytoplasm. The hydrophilic domain contains all the redox centers. NADH-quinone oxidoreductase forms a supercomplex with ubiquinol-cytochrome c reductase complex (complex III or cytochrome b-c1 complex) and cytochrome c oxidase (complex IV), which stabilizes the NADH-quinone oxidoreductase complex. The cofactor is [4Fe-4S] cluster.

Its subcellular location is the cell inner membrane. It carries out the reaction a quinone + NADH + 5 H(+)(in) = a quinol + NAD(+) + 4 H(+)(out). Its function is as follows. NDH-1 shuttles electrons from NADH, via FMN and iron-sulfur (Fe-S) centers, to quinones in the respiratory chain. The immediate electron acceptor for the enzyme in this species is believed to be ubiquinone. Couples the redox reaction to proton translocation (for every two electrons transferred, four hydrogen ions are translocated across the cytoplasmic membrane), and thus conserves the redox energy in a proton gradient. The protein is NADH-quinone oxidoreductase subunit B of Paracoccus denitrificans (strain Pd 1222).